The sequence spans 285 residues: Inositol monophosphatase 1 (285 aa).

Residues Glu-73, Asp-93, Ile-95, and Asp-96 each coordinate Mg(2+). A substrate-binding site is contributed by Glu-73. Residues 95-98 (IDGT), 198-200 (GTA), Glu-217, and Asp-224 each bind substrate. Asp-224 serves as a coordination point for Mg(2+).

This sequence belongs to the inositol monophosphatase superfamily. Homodimer. Requires Mg(2+) as cofactor.

The protein resides in the cytoplasm. The catalysed reaction is a myo-inositol phosphate + H2O = myo-inositol + phosphate. It catalyses the reaction 1D-myo-inositol 1-phosphate + H2O = myo-inositol + phosphate. The enzyme catalyses 1D-myo-inositol 2-phosphate + H2O = myo-inositol + phosphate. It carries out the reaction 1D-myo-inositol 3-phosphate + H2O = myo-inositol + phosphate. The catalysed reaction is 1D-myo-inositol 4-phosphate + H2O = myo-inositol + phosphate. It catalyses the reaction 1D-myo-inositol 5-phosphate + H2O = myo-inositol + phosphate. The enzyme catalyses 1D-myo-inositol 6-phosphate + H2O = myo-inositol + phosphate. It carries out the reaction scyllo-inositol 1-phosphate + H2O = scyllo-inositol + phosphate. The catalysed reaction is alpha-D-galactose 1-phosphate + H2O = D-galactose + phosphate. It catalyses the reaction alpha-D-glucose 1-phosphate + H2O = D-glucose + phosphate. The enzyme catalyses D-glucose 6-phosphate + H2O = D-glucose + phosphate. It carries out the reaction beta-D-fructose 1-phosphate + H2O = D-fructose + phosphate. The catalysed reaction is glycerol 2-phosphate + H2O = glycerol + phosphate. It catalyses the reaction adenosine 2'-phosphate + H2O = adenosine + phosphate. Its pathway is polyol metabolism; myo-inositol biosynthesis; myo-inositol from D-glucose 6-phosphate: step 2/2. Inhibited by Li(+), Ca(2+) and Mn(2+), but also by Mg(2+) at concentrations above 3 mM. Functionally, phosphatase involved in the dephosphorylation of myo-inositol monophosphate to generate myo-inositol. Is also able to dephosphorylate scyllo-inositol-phosphate, myo-inositol 1,4-diphosphate, scyllo-inositol-1,3-diphosphate and scyllo-inositol-1,4-diphosphate. Also dephosphorylates in vitro other sugar-phosphates including D-galactose-1-phosphate, glucose-1-phosphate, glucose-6-phosphate, fructose-1-phosphate, beta-glycerophosphate and 2'-AMP. Responsible for the provision of inositol required for synthesis of phosphatidylinositol and polyphosphoinositides, and involved in maintaining normal brain function. Has been implicated as the pharmacological target for lithium Li(+) action in brain. This Xenopus laevis (African clawed frog) protein is Inositol monophosphatase 1 (impa1).